The chain runs to 93 residues: Small ribosomal subunit protein uS19c (93 aa).

Belongs to the universal ribosomal protein uS19 family.

It is found in the plastid. The protein resides in the chloroplast. Its function is as follows. Protein S19 forms a complex with S13 that binds strongly to the 16S ribosomal RNA. This chain is Small ribosomal subunit protein uS19c, found in Ipomoea purpurea (Common morning glory).